A 710-amino-acid polypeptide reads, in one-letter code: Prolyl endopeptidase (710 aa).

At methionine 1 the chain carries N-acetylmethionine. An N6-acetyllysine modification is found at lysine 157. Active-site charge relay system residues include serine 554, aspartate 641, and histidine 680.

The protein belongs to the peptidase S9A family. Monomer. Post-translationally, the N-terminus is blocked.

Its subcellular location is the cytoplasm. The enzyme catalyses Hydrolysis of Pro-|-Xaa &gt;&gt; Ala-|-Xaa in oligopeptides.. Functionally, cleaves peptide bonds on the C-terminal side of prolyl residues within peptides that are up to approximately 30 amino acids long. This Homo sapiens (Human) protein is Prolyl endopeptidase (PREP).